A 398-amino-acid polypeptide reads, in one-letter code: Probable elongation factor 1-gamma (398 aa).

Residues 66-199 (GTSANAETVQ…SVAQFNQAKF (134 aa)) form the GST C-terminal domain. The segment at 210-248 (APKAEKPKKEAKPAAAAAQPEDDEPKEEKSKDPFQDMPK) is disordered. Basic and acidic residues predominate over residues 211 to 221 (PKAEKPKKEAK). Positions 239-398 (SKDPFQDMPK…KKFNQGKIFK (160 aa)) constitute an EF-1-gamma C-terminal domain.

In terms of assembly, EF-1 is composed of four subunits: alpha, beta, delta, and gamma. In terms of processing, AMPylated by fic-1.

Functionally, probably plays a role in anchoring the complex to other cellular components. This chain is Probable elongation factor 1-gamma, found in Caenorhabditis elegans.